The chain runs to 326 residues: H-2 class I histocompatibility antigen, Q8 alpha chain (326 aa).

The N-terminal stretch at 1–21 (MALTMLLLLVAAALTLIETRA) is a signal peptide. The segment at 22-111 (GPHSLRYFHT…AQRYYNQSKG (90 aa)) is alpha-1. The Extracellular portion of the chain corresponds to 22–305 (GPHSLRYFHT…EPPPSTVSNM (284 aa)). An N-linked (GlcNAc...) asparagine glycan is attached at N107. The tract at residues 112 to 203 (GSHTLQWMYG…QLRKETLLCT (92 aa)) is alpha-2. Intrachain disulfides connect C122–C185 and C224–C280. The interval 204–295 (DPPKAHVTHH…GLPEPLTLRW (92 aa)) is alpha-3. The 89-residue stretch at 206–294 (PKAHVTHHPR…EGLPEPLTLR (89 aa)) folds into the Ig-like C1-type domain. N277 carries an N-linked (GlcNAc...) asparagine glycan. The tract at residues 296-305 (EPPPSTVSNM) is connecting peptide. The helical transmembrane segment at 306-326 (ANVAILVVLVAWPSLELWWIL) threads the bilayer.

This sequence belongs to the MHC class I family. Heterodimer of an alpha chain and a beta chain (beta-2-microglobulin).

It localises to the membrane. Functionally, involved in the presentation of foreign antigens to the immune system. The chain is H-2 class I histocompatibility antigen, Q8 alpha chain (H2-Q8) from Mus musculus (Mouse).